A 314-amino-acid polypeptide reads, in one-letter code: MSLLDWFAERRRQTSLNLTGSSPFDKERQVREIADGLWQKCPACDTLTYTKDLQQNWQVCPSCGHHHRITAPERLEQLLDPGSWQPLDEHLAPTDPLHFFDQKPYSERLATYQERTQLKDAVLTGLGSLEGIPVAIGVMDFRFMGGSMGSVVGEKIARLTERATCDHLPLILFSASGGARMQEGILSLMQMAKTSAALQRHRDARQLFISVLTHPTYGGVTASFAMLGDLILAEPGVQVGFAGPNVIEQTIGKGKLPEGFQTAEYLLAQGLIDAIVPRTELRKRLAQLLSMHRPRLHMSLPSIDSEALTLQPML.

The 271-residue stretch at 37–307 (LWQKCPACDT…MSLPSIDSEA (271 aa)) folds into the CoA carboxyltransferase N-terminal domain. Positions 41, 44, 60, and 63 each coordinate Zn(2+). A C4-type zinc finger spans residues 41–63 (CPACDTLTYTKDLQQNWQVCPSC).

Belongs to the AccD/PCCB family. Acetyl-CoA carboxylase is a heterohexamer composed of biotin carboxyl carrier protein (AccB), biotin carboxylase (AccC) and two subunits each of ACCase subunit alpha (AccA) and ACCase subunit beta (AccD). Zn(2+) serves as cofactor.

The protein resides in the cytoplasm. The enzyme catalyses N(6)-carboxybiotinyl-L-lysyl-[protein] + acetyl-CoA = N(6)-biotinyl-L-lysyl-[protein] + malonyl-CoA. It participates in lipid metabolism; malonyl-CoA biosynthesis; malonyl-CoA from acetyl-CoA: step 1/1. In terms of biological role, component of the acetyl coenzyme A carboxylase (ACC) complex. Biotin carboxylase (BC) catalyzes the carboxylation of biotin on its carrier protein (BCCP) and then the CO(2) group is transferred by the transcarboxylase to acetyl-CoA to form malonyl-CoA. The polypeptide is Acetyl-coenzyme A carboxylase carboxyl transferase subunit beta (Synechococcus sp. (strain JA-2-3B'a(2-13)) (Cyanobacteria bacterium Yellowstone B-Prime)).